The sequence spans 406 residues: (R)-benzylsuccinyl-CoA dehydrogenase (406 aa).

This sequence belongs to the acyl-CoA dehydrogenase family. As to quaternary structure, homotetramer. Requires FAD as cofactor.

The catalysed reaction is (R)-2-benzylsuccinyl-CoA + oxidized [electron-transfer flavoprotein] + H(+) = (E)-2-benzylidenesuccinyl-CoA + reduced [electron-transfer flavoprotein]. It participates in xenobiotic degradation; toluene degradation. Its activity is regulated as follows. Inhibited by (S)-benzylsuccinyl-CoA. Its function is as follows. Catalyzes the oxidation of benzylsuccinyl-CoA to benzylidenesuccinyl-CoA. This Thauera aromatica protein is (R)-benzylsuccinyl-CoA dehydrogenase (bbsG).